Here is a 129-residue protein sequence, read N- to C-terminus: Lysozyme C-1/C-2 (129 aa).

The 129-residue stretch at 1 to 129 folds into the C-type lysozyme domain; it reads KVFERCELAR…VSSYVEGCTL (129 aa). 4 disulfide bridges follow: C6–C127, C30–C115, C65–C81, and C77–C95. Active-site residues include E35 and D53.

It belongs to the glycosyl hydrolase 22 family. Monomer.

The catalysed reaction is Hydrolysis of (1-&gt;4)-beta-linkages between N-acetylmuramic acid and N-acetyl-D-glucosamine residues in a peptidoglycan and between N-acetyl-D-glucosamine residues in chitodextrins.. In terms of biological role, lysozymes have primarily a bacteriolytic function; those in tissues and body fluids are associated with the monocyte-macrophage system and enhance the activity of immunoagents. This chain is Lysozyme C-1/C-2, found in Axis axis (Axis deer).